Reading from the N-terminus, the 594-residue chain is Probable ABC transporter-binding protein DR_1571 (594 aa).

Residues 1 to 18 (MKKVMMLALALGASTSLA) form the signal peptide.

Belongs to the bacterial solute-binding protein 5 family.

In terms of biological role, probably part of a binding-protein-dependent transport system. The protein is Probable ABC transporter-binding protein DR_1571 of Deinococcus radiodurans (strain ATCC 13939 / DSM 20539 / JCM 16871 / CCUG 27074 / LMG 4051 / NBRC 15346 / NCIMB 9279 / VKM B-1422 / R1).